We begin with the raw amino-acid sequence, 134 residues long: Small ribosomal subunit protein uS11 (134 aa).

Belongs to the universal ribosomal protein uS11 family. In terms of assembly, part of the 30S ribosomal subunit. Interacts with proteins S7 and S18. Binds to IF-3.

Its function is as follows. Located on the platform of the 30S subunit, it bridges several disparate RNA helices of the 16S rRNA. Forms part of the Shine-Dalgarno cleft in the 70S ribosome. The polypeptide is Small ribosomal subunit protein uS11 (Corynebacterium glutamicum (strain R)).